The following is a 524-amino-acid chain: Thioredoxin reductase 2, mitochondrial (524 aa).

A mitochondrion-targeting transit peptide spans 1–36 (MAAMAVALRGLGGRFRWRTQAVAGGVRGAARGAAAG). Residue 41-70 (DLLVVGGGSGGLACAKEAAQLGRKVAVVDY) participates in FAD binding. Residues Cys-86 and Cys-91 are joined by a disulfide bond. Lys-175 and Lys-329 each carry N6-succinyllysine. His-497 serves as the catalytic Proton acceptor. Residues 522 to 523 (CU) constitute a cross-link (cysteinyl-selenocysteine (Cys-Sec)). Sec-523 is a non-standard amino acid (selenocysteine).

The protein belongs to the class-I pyridine nucleotide-disulfide oxidoreductase family. Homodimer. FAD serves as cofactor. In terms of tissue distribution, highly expressed in the prostate, ovary, liver, testis, uterus, colon and small intestine. Intermediate levels in brain, skeletal muscle, heart and spleen. Low levels in placenta, pancreas, thymus and peripheral blood leukocytes. According to PubMed:10608886, high levels in kidney, whereas according to PubMed:9923614, levels are low. High expression is observed in the adrenal cortex.

It localises to the mitochondrion. It catalyses the reaction [thioredoxin]-dithiol + NADP(+) = [thioredoxin]-disulfide + NADPH + H(+). Its function is as follows. Involved in the control of reactive oxygen species levels and the regulation of mitochondrial redox homeostasis. Maintains thioredoxin in a reduced state. May play a role in redox-regulated cell signaling. The protein is Thioredoxin reductase 2, mitochondrial of Homo sapiens (Human).